Reading from the N-terminus, the 443-residue chain is UDP-N-acetylmuramate--L-alanine ligase (443 aa).

An ATP-binding site is contributed by 110–116 (GAHGKTS).

This sequence belongs to the MurCDEF family.

The protein resides in the cytoplasm. It catalyses the reaction UDP-N-acetyl-alpha-D-muramate + L-alanine + ATP = UDP-N-acetyl-alpha-D-muramoyl-L-alanine + ADP + phosphate + H(+). It participates in cell wall biogenesis; peptidoglycan biosynthesis. In terms of biological role, cell wall formation. The protein is UDP-N-acetylmuramate--L-alanine ligase of Streptococcus agalactiae serotype V (strain ATCC BAA-611 / 2603 V/R).